The following is a 216-amino-acid chain: Ras-related protein Rab-5C (216 aa).

GTP contacts are provided by S30, A31, G33, K34, S35, S36, H47, E48, T53, and G79. S35 is a binding site for Mg(2+). 2 short sequence motifs (switch) span residues 45–57 and 78–94; these read QFHE…IGAA and AGQE…YRGA. T53 serves as a coordination point for Mg(2+). S85 is modified (phosphoserine; by LRRK2). Residues N134, K135, D137, A165, and K166 each coordinate GTP. The interval 185–216 is disordered; sequence NEPQNATGAPGRNRGVDLQENNPASRSQCCSN. Residues 203 to 216 are compositionally biased toward polar residues; that stretch reads QENNPASRSQCCSN. 2 S-geranylgeranyl cysteine lipidation sites follow: C213 and C214.

The protein belongs to the small GTPase superfamily. Rab family. As to quaternary structure, interacts with EEA1. Interacts with INCA1. Interacts with GDI1, GDI2, CHML and CHM; phosphorylation at Ser-85 disrupts this interaction. The cofactor is Mg(2+). In terms of processing, phosphorylation of Ser-85 in the switch II region by LRRK2 prevents the association of RAB regulatory proteins, including CHM, CHML and RAB GDP dissociation inhibitors GDI1 and GDI2. Post-translationally, (Microbial infection) Glycosylated on arginine residues by S.typhimurium protein Ssek3.

Its subcellular location is the cell membrane. The protein localises to the early endosome membrane. The protein resides in the melanosome. The catalysed reaction is GTP + H2O = GDP + phosphate + H(+). Its activity is regulated as follows. Regulated by guanine nucleotide exchange factors (GEFs) which promote the exchange of bound GDP for free GTP. Regulated by GTPase activating proteins (GAPs) which increase the GTP hydrolysis activity. Inhibited by GDP dissociation inhibitors (GDIs). The small GTPases Rab are key regulators of intracellular membrane trafficking, from the formation of transport vesicles to their fusion with membranes. Rabs cycle between an inactive GDP-bound form and an active GTP-bound form that is able to recruit to membranes different sets of downstream effectors directly responsible for vesicle formation, movement, tethering and fusion. The polypeptide is Ras-related protein Rab-5C (Homo sapiens (Human)).